A 342-amino-acid chain; its full sequence is Heat-inducible transcription repressor HrcA (342 aa).

It belongs to the HrcA family.

In terms of biological role, negative regulator of class I heat shock genes (grpE-dnaK-dnaJ and groELS operons). Prevents heat-shock induction of these operons. The chain is Heat-inducible transcription repressor HrcA from Onion yellows phytoplasma (strain OY-M).